Consider the following 192-residue polypeptide: MASLTTLKNTAIVTGSFLSGAMITLSTITVPVLLETSTHPPQLLHQWVRTYHYGHISLPTISIATAILYFYIAAYQGAREQPWRKAALVGFLTIVMVPFTWIVMSSTNGMLFGLEAGNRDHSQFFEQGANRSGLKGANSSQSHGLGNVSVGIGVEMATLEGVRELLVRWKWMHLVRSLFPLMAAVLGVGICV.

Helical transmembrane passes span 12–32, 54–74, and 86–106; these read IVTG…TVPV, GHIS…YIAA, and AALV…VMSS. Asn130, Asn138, and Asn147 each carry an N-linked (GlcNAc...) asparagine glycan. A helical membrane pass occupies residues 172 to 192; the sequence is MHLVRSLFPLMAAVLGVGICV.

The protein belongs to the anthrone oxygenase family.

It is found in the membrane. It carries out the reaction emodin anthrone + O2 = emodin + H2O + H(+). The protein operates within secondary metabolite biosynthesis. In terms of biological role, anthrone oxygenase; part of the gene cluster that mediates the biosynthesis of monodictyphenone, a prenyl xanthone derivative. The pathway begins with the synthesis of atrochrysone thioester by the polyketide synthase (PKS) mdpG. The atrochrysone carboxyl ACP thioesterase mdpF then breaks the thioester bond and releases the atrochrysone carboxylic acid from mdpG. The atrochrysone carboxylic acid is then converted to atrochrysone which is further transformed into emodin anthrone by mdpH-1 and mdpH-2. Emodin is further modified to yield monodictyphenone via several steps involving mdpB, mdpC mdpJ, mdpK and mdpL. These enzymes with xptA, xptB and xptC are also proposed to be involved in the synthesis of shamixanthone from emodin. Especially, direct reduction of emodin by the short chain dehydrogenase mdpC followed by dehydration catalyzed by the scytalone dehydratase-like protein mdpB gives loss of oxygen and formation of chrysophanol intermediate in two simple steps. In Emericella nidulans (strain FGSC A4 / ATCC 38163 / CBS 112.46 / NRRL 194 / M139) (Aspergillus nidulans), this protein is Anthrone oxygenase.